A 190-amino-acid chain; its full sequence is Shikimate kinase (190 aa).

19-24 is a binding site for ATP; it reads GSGKTT. Thr-23 serves as a coordination point for Mg(2+). Substrate contacts are provided by Asp-41, Arg-65, and Gly-87. Residue Arg-124 coordinates ATP. Arg-143 serves as a coordination point for substrate.

It belongs to the shikimate kinase family. Monomer. Requires Mg(2+) as cofactor.

Its subcellular location is the cytoplasm. It carries out the reaction shikimate + ATP = 3-phosphoshikimate + ADP + H(+). It functions in the pathway metabolic intermediate biosynthesis; chorismate biosynthesis; chorismate from D-erythrose 4-phosphate and phosphoenolpyruvate: step 5/7. Functionally, catalyzes the specific phosphorylation of the 3-hydroxyl group of shikimic acid using ATP as a cosubstrate. This is Shikimate kinase from Synechococcus sp. (strain ATCC 27144 / PCC 6301 / SAUG 1402/1) (Anacystis nidulans).